The primary structure comprises 168 residues: Transcription antitermination protein NusB (168 aa).

The tract at residues 147–168 (RGLINNSSRNTSRSEEKHSTEK) is disordered. The span at 158-168 (SRSEEKHSTEK) shows a compositional bias: basic and acidic residues.

This sequence belongs to the NusB family.

Functionally, involved in transcription antitermination. Required for transcription of ribosomal RNA (rRNA) genes. Binds specifically to the boxA antiterminator sequence of the ribosomal RNA (rrn) operons. The sequence is that of Transcription antitermination protein NusB from Chlorobium phaeobacteroides (strain BS1).